Consider the following 136-residue polypeptide: Lipoprotein YghG (136 aa).

The first 24 residues, 1 to 24, serve as a signal peptide directing secretion; it reads MSIKQMPGRVLISLLLSVTGLLSG. The N-palmitoyl cysteine moiety is linked to residue C25. The S-diacylglycerol cysteine moiety is linked to residue C25.

The protein belongs to the GspS/AspS pilotin family.

It is found in the cell outer membrane. Its function is as follows. Involved in a type II secretion system (T2SS, formerly general secretion pathway, GSP) for the export of folded proteins across the outer membrane. In a functional T2SS this subunit helps assemble the outer membrane channel. The chain is Lipoprotein YghG (yghG) from Escherichia coli (strain K12).